The sequence spans 138 residues: Large ribosomal subunit protein uL16 (138 aa).

The segment covering M1–Q13 has biased composition (basic residues). Residues M1–G24 are disordered.

The protein belongs to the universal ribosomal protein uL16 family. In terms of assembly, part of the 50S ribosomal subunit.

Binds 23S rRNA and is also seen to make contacts with the A and possibly P site tRNAs. The chain is Large ribosomal subunit protein uL16 from Burkholderia lata (strain ATCC 17760 / DSM 23089 / LMG 22485 / NCIMB 9086 / R18194 / 383).